Reading from the N-terminus, the 246-residue chain is Small ribosomal subunit protein uS2 (246 aa).

This sequence belongs to the universal ribosomal protein uS2 family.

The sequence is that of Small ribosomal subunit protein uS2 from Burkholderia cenocepacia (strain HI2424).